Reading from the N-terminus, the 140-residue chain is Transmembrane protein 107 (140 aa).

2 helical membrane passes run 7 to 27 (LVPS…TLFW) and 53 to 73 (LVAA…GFLS). Asn79 carries an N-linked (GlcNAc...) asparagine glycan. The next 2 helical transmembrane spans lie at 83-103 (SLLS…FVFE) and 113-133 (IFTF…IAVF).

As to quaternary structure, part of the tectonic-like complex (also named B9 complex). Interacts with TMEM237, TMEM231, MKS1 and TMEM216.

The protein resides in the membrane. It is found in the cell projection. The protein localises to the cilium. Functionally, plays a role in cilia formation and embryonic patterning. Requires for normal Sonic hedgehog (Shh) signaling in the neural tube and acts in combination with GLI2 and GLI3 to pattern ventral and intermediate neuronal cell types. During ciliogenesis regulates the ciliary transition zone localization of some MKS complex proteins. The protein is Transmembrane protein 107 of Mus musculus (Mouse).